A 326-amino-acid polypeptide reads, in one-letter code: tRNA-modifying protein YgfZ (326 aa).

The folate site is built by Trp-27 and Trp-189.

This sequence belongs to the tRNA-modifying YgfZ family.

It is found in the cytoplasm. Functionally, folate-binding protein involved in regulating the level of ATP-DnaA and in the modification of some tRNAs. It is probably a key factor in regulatory networks that act via tRNA modification, such as initiation of chromosomal replication. The sequence is that of tRNA-modifying protein YgfZ from Escherichia coli O7:K1 (strain IAI39 / ExPEC).